We begin with the raw amino-acid sequence, 375 residues long: Protein DEK (375 aa).

A disordered region spans residues 1–61; sequence MSASAPAAEG…LIVEGKREKK (61 aa). Position 2 is an N-acetylserine (S2). Residues T13 and T15 each carry the phosphothreonine modification. Position 19 is a phosphoserine (S19). Basic and acidic residues predominate over residues 19–30; that stretch reads SEKEPEMPGPRE. Over residues 31-47 the composition is skewed to acidic residues; that stretch reads ESEEEEDEDDEEEEEEE. The residue at position 32 (S32) is a Phosphoserine; by CK2. The span at 48-61 shows a compositional bias: basic and acidic residues; the sequence is KEKSLIVEGKREKK. A phosphoserine mark is found at S51, S72, S121, and S122. Positions 149 to 183 constitute an SAP domain; sequence LKKFRNAMLKSICEVLDLERSGVNSELVKRILNFL. The residue at position 159 (S159) is a Phosphoserine; by CK2. Residues 184–325 form a disordered region; the sequence is MHPKPSGKPL…LKKPPTDEEL (142 aa). Basic residues predominate over residues 194–203; that stretch reads PKSKKTCSKG. T199 bears the Phosphothreonine; by CK2 mark. Residues S201 and S204 each carry the phosphoserine; by CK2 modification. A Nuclear localization signal motif is present at residues 205–221; it reads KKERNSSGMARKAKRTK. S210, S227, S230, S231, and S232 each carry phosphoserine. A phosphoserine; by CK2 mark is found at S243, S244, and S251. Over residues 243 to 253 the composition is skewed to acidic residues; sequence SSDDEDKESEE. The segment covering 258–277 has biased composition (basic residues); that stretch reads KTAKREKPKQKATSKSKKSV. A compositionally biased stretch (low complexity) spans 278–296; sequence KSANVKKADSSTTKKNQNS. An ADP-ribosylserine modification is found at S279. Residues S287 and S288 each carry the phosphoserine; by CK2 modification. Phosphothreonine; by CK2 occurs at positions 289 and 290. S296, S301, S303, S306, and S307 each carry phosphoserine; by CK2. In terms of domain architecture, DEK-C spans 319-375; it reads PPTDEELKETIKKLLASANLEEVTMKQICKKVYENYPTYDLTERKDFIKTTVKELIS. DNA-binding regions lie at residues 337–351 and 367–371; these read NLEE…KKVY and KTTVK.

In terms of assembly, found in a mRNA splicing-dependent exon junction complex (EJC) with DEK, RBM8A, RNPS1, SRRM1 and ALYREF/THOC4. Interacts with histones H2A, H2B, H3, H4, acetylated histone H4, non-phosphorylated DAXX and HDAC2. Component of the B-WICH complex, at least composed of SMARCA5/SNF2H, BAZ1B/WSTF, SF3B1, DEK, MYO1C, ERCC6, MYBBP1A and DDX21. Binds DNA. In terms of processing, phosphorylated by CK2. Phosphorylation fluctuates during the cell cycle with a moderate peak during G(1) phase, and weakens the binding of DEK to DNA. As to expression, ubiquitous. Expressed at relatively high levels.

It localises to the nucleus. Involved in chromatin organization. In Homo sapiens (Human), this protein is Protein DEK (DEK).